Consider the following 213-residue polypeptide: ATP phosphoribosyltransferase (213 aa).

It belongs to the ATP phosphoribosyltransferase family. Short subfamily. As to quaternary structure, heteromultimer composed of HisG and HisZ subunits.

It is found in the cytoplasm. It carries out the reaction 1-(5-phospho-beta-D-ribosyl)-ATP + diphosphate = 5-phospho-alpha-D-ribose 1-diphosphate + ATP. It participates in amino-acid biosynthesis; L-histidine biosynthesis; L-histidine from 5-phospho-alpha-D-ribose 1-diphosphate: step 1/9. Catalyzes the condensation of ATP and 5-phosphoribose 1-diphosphate to form N'-(5'-phosphoribosyl)-ATP (PR-ATP). Has a crucial role in the pathway because the rate of histidine biosynthesis seems to be controlled primarily by regulation of HisG enzymatic activity. In Bacillus velezensis (strain DSM 23117 / BGSC 10A6 / LMG 26770 / FZB42) (Bacillus amyloliquefaciens subsp. plantarum), this protein is ATP phosphoribosyltransferase.